The following is a 604-amino-acid chain: uncharacterized protein (604 aa).

Positions 1-19 (MIVRILLLFIALFTFGVQA) are cleaved as a signal peptide.

This sequence to H.influenzae HbpA.

This is an uncharacterized protein from Escherichia coli (strain K12).